A 323-amino-acid polypeptide reads, in one-letter code: MKTTFLDFEQQIAELESKIEELRFVQDESSVDISDEIKMLAEKSLQLTKDVYANLTPWQVSQVARHPQRPYTLDYVGALFTDFHELHGDRTFADDQSIIGGLARFENQPCMVIGHQKGRDTKERALRNFGMSRPEGYRKAMRLMRLAEKFGIPVFTFVDTPGAFPGIDAEERNQSEAIGRNLYVQAELEVPIIATIIGEGGSGGALAIAMGDAVLMLQNSTYSVISPEGCASILWKTADKASEAAEQLGLTAQRLKALGLIDKIVAEPIGGAHRDYDGMMSNMRKALAESLKTFDGMKVDALLDRRHERLMSYGKFKEITAKS.

One can recognise a CoA carboxyltransferase C-terminal domain in the interval 40 to 293 (LAEKSLQLTK…RKALAESLKT (254 aa)).

The protein belongs to the AccA family. Acetyl-CoA carboxylase is a heterohexamer composed of biotin carboxyl carrier protein (AccB), biotin carboxylase (AccC) and two subunits each of ACCase subunit alpha (AccA) and ACCase subunit beta (AccD).

The protein resides in the cytoplasm. The catalysed reaction is N(6)-carboxybiotinyl-L-lysyl-[protein] + acetyl-CoA = N(6)-biotinyl-L-lysyl-[protein] + malonyl-CoA. It participates in lipid metabolism; malonyl-CoA biosynthesis; malonyl-CoA from acetyl-CoA: step 1/1. Component of the acetyl coenzyme A carboxylase (ACC) complex. First, biotin carboxylase catalyzes the carboxylation of biotin on its carrier protein (BCCP) and then the CO(2) group is transferred by the carboxyltransferase to acetyl-CoA to form malonyl-CoA. The chain is Acetyl-coenzyme A carboxylase carboxyl transferase subunit alpha from Polynucleobacter necessarius subsp. necessarius (strain STIR1).